A 231-amino-acid chain; its full sequence is MSPKKKAVVLLSGGLDSATTMAIAKAENYELYALTFQYGQRHAVELEAARRIAAALGAKEHLFISIDLRIIGGSALTGPFEVPKKQEGEETSAEIPVTYVPARNTIFLSYALAWAEVLQISEIFIGVNAVDYSGYPDCRPEYITAFEAMANLAIKAAVEGTMRVKIRTPLIDLSKADIIRKGMALSVDYGLTHSCYDPLPDGKPCGQCDSCHLRRKGFREAGFDDPAFSET.

11–21 (LSGGLDSATTM) is an ATP binding site. Zn(2+) contacts are provided by C195, C205, C208, and C211.

This sequence belongs to the QueC family. Requires Zn(2+) as cofactor.

The enzyme catalyses 7-carboxy-7-deazaguanine + NH4(+) + ATP = 7-cyano-7-deazaguanine + ADP + phosphate + H2O + H(+). It participates in purine metabolism; 7-cyano-7-deazaguanine biosynthesis. Its function is as follows. Catalyzes the ATP-dependent conversion of 7-carboxy-7-deazaguanine (CDG) to 7-cyano-7-deazaguanine (preQ(0)). In Syntrophus aciditrophicus (strain SB), this protein is 7-cyano-7-deazaguanine synthase.